Consider the following 161-residue polypeptide: Endoribonuclease YbeY (161 aa).

Residues H120, H124, and D130 each coordinate Zn(2+).

Belongs to the endoribonuclease YbeY family. Requires Zn(2+) as cofactor.

The protein localises to the cytoplasm. Functionally, single strand-specific metallo-endoribonuclease involved in late-stage 70S ribosome quality control and in maturation of the 3' terminus of the 16S rRNA. The polypeptide is Endoribonuclease YbeY (Chlamydia muridarum (strain MoPn / Nigg)).